A 273-amino-acid chain; its full sequence is Diaminopimelate epimerase (273 aa).

Substrate is bound by residues Asn-11 and Asn-60. Catalysis depends on Cys-69, which acts as the Proton donor. Residues 70–71, Asn-181, and 199–200 each bind substrate; these read GN and ER. The Proton acceptor role is filled by Cys-209. Residue 210 to 211 coordinates substrate; that stretch reads GT.

The protein belongs to the diaminopimelate epimerase family. In terms of assembly, homodimer.

The protein localises to the cytoplasm. It catalyses the reaction (2S,6S)-2,6-diaminopimelate = meso-2,6-diaminopimelate. It participates in amino-acid biosynthesis; L-lysine biosynthesis via DAP pathway; DL-2,6-diaminopimelate from LL-2,6-diaminopimelate: step 1/1. Its function is as follows. Catalyzes the stereoinversion of LL-2,6-diaminopimelate (L,L-DAP) to meso-diaminopimelate (meso-DAP), a precursor of L-lysine and an essential component of the bacterial peptidoglycan. This chain is Diaminopimelate epimerase, found in Helicobacter pylori (strain HPAG1).